A 1208-amino-acid polypeptide reads, in one-letter code: Chromosome partition protein Smc (1208 aa).

ATP is bound at residue 32-39 (PNGCGKSN). 3 coiled-coil regions span residues 170-205 (VTKY…GERI), 239-504 (EARA…ARVQ), and 694-1054 (VIER…QLQD).

This sequence belongs to the SMC family. Homodimer.

The protein localises to the cytoplasm. Functionally, required for chromosome condensation and partitioning. The protein is Chromosome partition protein Smc of Thauera aminoaromatica.